We begin with the raw amino-acid sequence, 62 residues long: UPF0434 protein Smed_3047 (62 aa).

Belongs to the UPF0434 family.

This is UPF0434 protein Smed_3047 from Sinorhizobium medicae (strain WSM419) (Ensifer medicae).